Here is a 260-residue protein sequence, read N- to C-terminus: uncharacterized protein (260 aa).

Residues 1–22 (MKHSKKLLLCISFLLITIFISG) form the signal peptide. Residue cysteine 23 is the site of N-palmitoyl cysteine attachment. Cysteine 23 carries the S-diacylglycerol cysteine lipid modification.

It belongs to the staphylococcal tandem lipoprotein family.

The protein localises to the cell membrane. This is an uncharacterized protein from Staphylococcus epidermidis (strain ATCC 35984 / DSM 28319 / BCRC 17069 / CCUG 31568 / BM 3577 / RP62A).